A 4558-amino-acid polypeptide reads, in one-letter code: Multifunctional-autoprocessing repeats-in-toxin (4558 aa).

The signal sequence occupies residues 1 to 32; it reads MVFYLIPKRRVWLMGKPFWRSVEYFFTGNYSA. RtxA repeat units follow at residues 114-131, 134-151, 154-170, 174-197, 200-217, 220-237, 268-285, 288-304, 594-611, 614-630, 634-651, 654-668, 751-763, 769-781, 792-808, 811-826, 830-845, 851-865, 868-885, 887-901, 906-920, 925-942, 944-960, 982-994, 1001-1016, 1041-1053, 1077-1089, 1097-1112, 1120-1132, 1135-1152, 1155-1169, 1173-1189, 1194-1209, 1211-1227, 1230-1246, 1252-1266, 1268-1285, 1306-1323, and 1325-1342; these read GAAG…GDVS, GAAA…GNVT, GAGG…QGNL, GAGA…GDVT, GAGA…GNIT, GAGA…GDIT, GVGG…GDIH, GGGA…GNDF, GAGG…GNVH, GGGI…FGNT, GGGA…GDLT, GAGL…SEQG, AGGA…MGEG, MLGG…HISN, ALGG…GNTL, MGGG…DGTT, MVGG…NGDT, GVGN…GQTL, MGAA…TSIA, MIGA…GEGN, MGGL…GNGD, MVAE…MSVA, MLAK…GTTL, MIGQ…KVGN, MVGK…DGTS, GKAN…GDGL, AAAK…HVGD, AGKG…GTTV, GNVM…GTTI, AKGK…LGVN, WGQA…DGDR, AKGE…GQEV, GEAN…DDYT, AWGK…GQNV, AKGE…GDSF, KGNI…MQVT, AKGQ…LNVT, AWGK…LNVA, and MKGK…LNIN. 3 disordered regions span residues 1623–1688, 1752–1779, and 1791–1890; these read HATQ…KEES, TLSD…QNRA, and DAEK…NADG. Over residues 1625–1634 the composition is skewed to polar residues; it reads TQNPAAQNAL. Residues 1635-1654 show a composition bias toward basic and acidic residues; sequence SDKERAEADRQRLEQEKQKQ. The span at 1660 to 1679 shows a compositional bias: polar residues; it reads GSQSQLESTDQQALENNGQA. Over residues 1791-1815 the composition is skewed to basic and acidic residues; that stretch reads DAEKRKADALAKGKDAQQAESDAHH. Residues 1879-1888 are compositionally biased toward polar residues; that stretch reads HVNTDSQTNA. Residues 1988–2422 enclose the ACD domain; sequence VPGFKSHFAS…HAEQWAKITA (435 aa). Position 1999–2003 (1999–2003) interacts with ATP; the sequence is SIGIE. 3 residues coordinate Mg(2+): Glu-2003, Glu-2065, and Gln-2149. Arg-2255 serves as a coordination point for ATP. Glu-2326 contributes to the Mg(2+) binding site. The interval 2574 to 2658 is membrane localization region (MLD); it reads ELMSVTELLD…SLLNQVNTRL (85 aa). A rho inactivation domain (RID) region spans residues 2734–3098; that stretch reads EYGQTVADTI…HQVTDVLDAL (365 aa). Positions 3195-3310 are ABH effector region; it reads VVLFLHGSGS…MPSMTKAITA (116 aa). The segment at 3404–3426 is disordered; it reads ASVDEDLDQQGLDTTSTKDQGIS. Residues 3414-3426 are compositionally biased toward polar residues; sequence GLDTTSTKDQGIS. The Peptidase C80 domain occupies 3462-3646; the sequence is PTTDGGETRF…AENNKVSLSW (185 aa). Residues 3468-3470, 3495-3496, and Arg-3526 contribute to the 1D-myo-inositol hexakisphosphate site; these read ETR and KH. The active-site For cysteine protease activity is the His-3532. 1D-myo-inositol hexakisphosphate is bound at residue Ser-3577. The active-site Nucleophile; for cysteine protease activity is the Cys-3581. 1D-myo-inositol hexakisphosphate is bound by residues 3610 to 3612, 3623 to 3624, Lys-3636, and Lys-3641; these read SVR and RK.

Mg(2+) serves as cofactor.

It localises to the secreted. The protein resides in the host cytoplasm. The protein localises to the host cytosol. It is found in the host cell membrane. It carries out the reaction L-lysyl-/S-(2E,6E,10E)-geranylgeranyl-L-cysteinyl-[protein] + hexadecanoyl-CoA = N(6)-hexadecanoyl-L-lysyl-/S-(2E,6E,10E)-geranylgeranyl-L-cysteinyl-[protein] + CoA + H(+). It catalyses the reaction L-lysyl-/S-(2E,6E,10E)-geranylgeranyl-L-cysteinyl-[protein] + dodecanoyl-CoA = N(6)-dodecanoyl-L-lysyl-/S-(2E,6E,10E)-geranylgeranyl-L-cysteinyl-[protein] + CoA + H(+). The catalysed reaction is L-lysyl-/S-(2E,6E,10E)-geranylgeranyl-L-cysteinyl-[protein] + decanoyl-CoA = N(6)-decanoyl-L-lysyl-/S-(2E,6E,10E)-geranylgeranyl-L-cysteinyl-[protein] + CoA + H(+). Its activity is regulated as follows. Protease activity is inhibited by N-ethylmaleimide but not other protease inhibitors. Protease activity is inhibited by aza-leucine epoxide. Protease activity is activated upon binding inositol hexakisphosphate (InsP6) via an allosteric mechanism: the active site is disordered or occluded in the absence of InsP6, protecting the protease active-site sulfhydryl until the toxin enters a eukaryotic cell. Upon processing at the Leu-3441-Ala-3442 site, the peptidase C80 domain is converted to a form with much reduced affinity for InsP6, but is reactivated for high affinity binding of InsP6 by cooperative binding of both a new substrate and InsP6. Reactivation allows cleavage at other sites, specifically at Leu residues between the effector domains. Its function is as follows. Precursor of a multifunctional toxin that causes destruction of the actin cytoskeleton by covalent cross-linking of actin and inactivation of Rho GTPases when translocated into the host cytoplasm. Upon translocation into the host cell, undergoes autoprocessing in cis mediated by the peptidase C80 domain (also named CPD domain): the protease activity is activated upon binding inositol hexakisphosphate (InsP6) present at the host cell membrane and delivers the Cysteine protease domain-containing toxin F3 chain to the host cytosol. The Cysteine protease domain-containing toxin F3 chain will then further cleave and release effector toxin chains that cause disassembly of the actin cytoskeleton and enhance V.cholerae colonization of the small intestine, possibly by facilitating evasion of phagocytic cells. Functionally, following autocatalytic cleavage in cis at the Leu-3441-Ala-3442 site, this chain mediates processing in trans to release other individual toxin chains to the host cytosol. Released effector toxin chains cause disassembly of the actin cytoskeleton and enhance V.cholerae colonization of the small intestine, possibly by facilitating evasion of phagocytic cells. Actin-directed toxin that catalyzes the covalent cross-linking of host cytoplasmic monomeric actin. Mediates the cross-link between 'Lys-50' of one monomer and 'Glu-270' of another actin monomer, resulting in formation of highly toxic actin oligomers that cause cell rounding. The toxin can be highly efficient at very low concentrations by acting on formin homology family proteins: toxic actin oligomers bind with high affinity to formins and adversely affect both nucleation and elongation abilities of formins, causing their potent inhibition in both profilin-dependent and independent manners. Acts as an acid--amino-acid ligase that transfers the gamma-phosphoryl group of ATP to the 'Glu-270' actin residue, resulting in the formation of an activated acyl phosphate intermediate. This intermediate is further hydrolyzed and the energy of hydrolysis is utilized for the formation of the amide bond between actin subunits. In terms of biological role, N-epsilon-fatty acyltransferase that mediates lysine-palmitoylation of host Rho GTPase proteins, with a strong preference for host Rac1. After delivery to the host cytosol, localizes to the host cell membrane where it palmitoylates host Rho GTPase proteins, resulting in loss of all active GTP-bound Rho and subsequent actin depolymerization. Prenylation of host Rac1 at the C-terminus is required for lysine-palmitoylation. Its function is as follows. Indirectly activates the small GTPase CDC42. This Vibrio cholerae serotype O1 (strain ATCC 39315 / El Tor Inaba N16961) protein is Multifunctional-autoprocessing repeats-in-toxin.